The sequence spans 242 residues: Ribonuclease PH (242 aa).

Residues arginine 89 and 127–129 (GTR) contribute to the phosphate site.

The protein belongs to the RNase PH family. As to quaternary structure, homohexameric ring arranged as a trimer of dimers.

It carries out the reaction tRNA(n+1) + phosphate = tRNA(n) + a ribonucleoside 5'-diphosphate. Functionally, phosphorolytic 3'-5' exoribonuclease that plays an important role in tRNA 3'-end maturation. Removes nucleotide residues following the 3'-CCA terminus of tRNAs; can also add nucleotides to the ends of RNA molecules by using nucleoside diphosphates as substrates, but this may not be physiologically important. Probably plays a role in initiation of 16S rRNA degradation (leading to ribosome degradation) during starvation. The protein is Ribonuclease PH of Neisseria meningitidis serogroup A / serotype 4A (strain DSM 15465 / Z2491).